The chain runs to 180 residues: Amnesiac neuropeptides (180 aa).

An N-terminal signal peptide occupies residues 1 to 32 (MRSFCCCFYPAAVALHCVLLFYTFFLLFRASA). 2 consecutive propeptides follow at residues 33 to 35 (LRR) and 152 to 180 (GRRS…GEMR). The segment at 155–180 (SVPRGQPKFSRENPRALSPSLLGEMR) is disordered.

In terms of tissue distribution, enriched expression in the embryonic and larval nervous systems. Strongly expressed in two large neurons that project over all the lobes of the mushroom bodies.

It is found in the secreted. Required for associative learning and memory in adults. Expression pattern suggests a modulatory role in memory formation. Controls neurotransmitter-mediated signaling pathways associated with the structure of the larval peripheral nerve. The sequence is that of Amnesiac neuropeptides (amn) from Drosophila melanogaster (Fruit fly).